The following is a 129-amino-acid chain: Small ribosomal subunit protein uS11 (129 aa).

The protein belongs to the universal ribosomal protein uS11 family. As to quaternary structure, part of the 30S ribosomal subunit. Interacts with proteins S7 and S18. Binds to IF-3.

Its function is as follows. Located on the platform of the 30S subunit, it bridges several disparate RNA helices of the 16S rRNA. Forms part of the Shine-Dalgarno cleft in the 70S ribosome. The sequence is that of Small ribosomal subunit protein uS11 from Thermosipho melanesiensis (strain DSM 12029 / CIP 104789 / BI429).